A 198-amino-acid chain; its full sequence is Basic helix-loop-helix transcription factor amos (198 aa).

Positions 76–131 (EQQQHHLQANPLGKNQGRSPRYWNKQQRSKPYDKLSTSMSSSTSSASSSSSSSAGF) are disordered. The span at 111–129 (STSMSSSTSSASSSSSSSA) shows a compositional bias: low complexity. Positions 138-190 (KRRLAANARERRRMNSLNDAFDKLRDVVPSLGHDRRLSKYETLQMAQAYIGDL) constitute a bHLH domain.

Efficient DNA binding requires dimerization with another bHLH protein. Interacts with Daughterless (da). As to expression, during embryonic development, expression is seen in a small cluster of ectodermal cells during stage 10 which becomes restricted to 1 cell by stage 11. Expression is lost from this cell in the thorax and then the abdomen. Later expression is restricted to sensory organ precursors. Very transient expression was detected in distal leg disks at approximately 0-4 hours after puparium formation (APF), correlating with the anlage of the innervated tarsal claw.

Its subcellular location is the nucleus. Its function is as follows. Transcription factor involved in early neurogenesis; sensillum basiconica formation and maybe sensillum trichodea development. Promotes multiple dendritic (MD) neuron formation. Required for olfactory sensilla; regulated by lozenge (lz). In Drosophila melanogaster (Fruit fly), this protein is Basic helix-loop-helix transcription factor amos (amos).